Consider the following 683-residue polypeptide: Actin-binding LIM protein 3 (683 aa).

An N-acetylmethionine modification is found at Met-1. LIM zinc-binding domains follow at residues Ile-21–Thr-80, Thr-80–Ser-140, Ser-149–Ile-208, and Ile-208–Glu-268. 8 positions are modified to phosphoserine: Ser-277, Ser-280, Ser-282, Ser-286, Ser-290, Ser-337, Ser-372, and Ser-373. The disordered stretch occupies residues Ser-372 to Ser-472. Position 376 is a phosphotyrosine (Tyr-376). Ser-379 and Ser-388 each carry phosphoserine. Composition is skewed to polar residues over residues Pro-380–Arg-393, Gly-406–Gln-426, and Ser-454–Tyr-471. Phosphoserine occurs at positions 493, 503, and 504. Thr-543 carries the post-translational modification Phosphothreonine. 3 positions are modified to phosphoserine: Ser-567, Ser-576, and Ser-607. Residues Met-615–Phe-683 form the HP domain. Omega-N-methylarginine is present on Arg-631.

As to quaternary structure, directly interacts with F-actin and ABRA. Expressed predominantly in heart and brain.

It localises to the cytoplasm. Its function is as follows. May act as scaffold protein. May stimulate ABRA activity and ABRA-dependent SRF transcriptional activity. The polypeptide is Actin-binding LIM protein 3 (ABLIM3) (Homo sapiens (Human)).